The chain runs to 364 residues: Probable dual-specificity RNA methyltransferase RlmN (364 aa).

Catalysis depends on E106, which acts as the Proton acceptor. The 239-residue stretch at 112–350 folds into the Radical SAM core domain; the sequence is YPQRNTVCIS…SCTVRDTRGR (239 aa). A disulfide bridge links C119 with C356. The [4Fe-4S] cluster site is built by C126, C130, and C133. S-adenosyl-L-methionine contacts are provided by residues 177–178, S211, 234–236, and N313; these read GE and SLH. C356 serves as the catalytic S-methylcysteine intermediate.

It belongs to the radical SAM superfamily. RlmN family. The cofactor is [4Fe-4S] cluster.

It localises to the cytoplasm. It catalyses the reaction adenosine(2503) in 23S rRNA + 2 reduced [2Fe-2S]-[ferredoxin] + 2 S-adenosyl-L-methionine = 2-methyladenosine(2503) in 23S rRNA + 5'-deoxyadenosine + L-methionine + 2 oxidized [2Fe-2S]-[ferredoxin] + S-adenosyl-L-homocysteine. The enzyme catalyses adenosine(37) in tRNA + 2 reduced [2Fe-2S]-[ferredoxin] + 2 S-adenosyl-L-methionine = 2-methyladenosine(37) in tRNA + 5'-deoxyadenosine + L-methionine + 2 oxidized [2Fe-2S]-[ferredoxin] + S-adenosyl-L-homocysteine. In terms of biological role, specifically methylates position 2 of adenine 2503 in 23S rRNA and position 2 of adenine 37 in tRNAs. This Mycobacterium ulcerans (strain Agy99) protein is Probable dual-specificity RNA methyltransferase RlmN.